We begin with the raw amino-acid sequence, 149 residues long: Large ribosomal subunit protein bL9 (149 aa).

This sequence belongs to the bacterial ribosomal protein bL9 family.

Functionally, binds to the 23S rRNA. The polypeptide is Large ribosomal subunit protein bL9 (Amoebophilus asiaticus (strain 5a2)).